The sequence spans 450 residues: Cysteine proteinase (450 aa).

A signal peptide spans 1–20 (MPRTEMVRFVRLPVVLLAMA). A propeptide spans 21 to 125 (ACLASVALGS…RKTVNVTTGR (105 aa)) (activation peptide). N-linked (GlcNAc...) asparagine glycosylation is present at Asn-120. Cys-147 and Cys-188 form a disulfide bridge. Catalysis depends on residues Cys-150, His-287, and Asn-307. Residues 343-450 (TPPPPPPPPP…TKAARLVPHQ (108 aa)) are 108-residue extension. A glycan (N-linked (GlcNAc...) asparagine) is linked at Asn-397.

It belongs to the peptidase C1 family.

The protein resides in the lysosome. Its function is as follows. The cysteine proteinases have a potential role in host-parasite interaction and virulence. This is Cysteine proteinase from Trypanosoma brucei brucei.